A 429-amino-acid chain; its full sequence is 3-phosphoshikimate 1-carboxyvinyltransferase (429 aa).

Residues lysine 22, serine 23, and arginine 27 each contribute to the 3-phosphoshikimate site. Phosphoenolpyruvate is bound at residue lysine 22. Phosphoenolpyruvate contacts are provided by glycine 94 and arginine 122. Residues serine 167, glutamine 169, aspartate 315, and lysine 342 each coordinate 3-phosphoshikimate. Phosphoenolpyruvate is bound at residue glutamine 169. Residue aspartate 315 is the Proton acceptor of the active site. Phosphoenolpyruvate contacts are provided by arginine 346 and arginine 388.

The protein belongs to the EPSP synthase family. Monomer.

It localises to the cytoplasm. It catalyses the reaction 3-phosphoshikimate + phosphoenolpyruvate = 5-O-(1-carboxyvinyl)-3-phosphoshikimate + phosphate. The protein operates within metabolic intermediate biosynthesis; chorismate biosynthesis; chorismate from D-erythrose 4-phosphate and phosphoenolpyruvate: step 6/7. Functionally, catalyzes the transfer of the enolpyruvyl moiety of phosphoenolpyruvate (PEP) to the 5-hydroxyl of shikimate-3-phosphate (S3P) to produce enolpyruvyl shikimate-3-phosphate and inorganic phosphate. This chain is 3-phosphoshikimate 1-carboxyvinyltransferase, found in Geobacter sp. (strain M21).